The following is a 469-amino-acid chain: MCAKQQQTLLPTRAAHGRLHRNRDAVAWPFSTLCRVSGPTLFQMTFTAALWVAVFGKCGPPPAIPNALPASDVNRTDFESHTTLKYECLPGYGRGISRMMVYCKPSGEWEISVSCAKKHCRNPGYLDNGYVNGETITFGSQIEFSCQEGFILVGSSTSSCEVRGKGVAWSNPFPECVIVKCGPPPDISNGKHSGTEDFYPYNHGISYTCDPGFRLVGSPFIGCTVVNKTVPVWSSSPPTCEKIICSQPNILHGVIVSGYKATYTHRDSVRLACLNGTVLRGRHVIECQGNGNWSSLPTCEFDCDLPPAIVNGYYTSMVYSKITLVTYECDKGYRLVGKAIISCSFSKWKGTAPQCKALCQKPEVGNGTLSDEKDQYVESENVTIQCDSGFAMLGSQSISCSESGTWYPEVPRCEQEASEDLKPALTGNKTMQYVPNSHDVKMALEIYKLTLEVELLQLQIQKEKHTEAH.

The N-terminal stretch at M1–G56 is a signal peptide. Sushi domains are found at residues K57–K117, K118–I178, V179–K242, I243–F301, D302–A357, and L358–Q415. Disulfide bonds link C58–C103, C88–C115, C120–C160, C146–C176, C181–C223, C209–C240, C245–C287, C273–C299, C303–C343, C329–C355, C359–C400, and C386–C413. N-linked (GlcNAc...) asparagine glycosylation is present at N74. 3 N-linked (GlcNAc...) asparagine glycosylation sites follow: N227, N275, and N292. Residues N366 and N381 are each glycosylated (N-linked (GlcNAc...) asparagine). An N-linked (GlcNAc...) asparagine glycan is attached at N428.

In terms of assembly, homoheptamer; not covalently linked. Mouse lacks the beta chain of C4BP.

It localises to the secreted. Its function is as follows. Controls the classical pathway of complement activation. It binds as a cofactor to C3b/C4b inactivator (C3bINA), which then hydrolyzes the complement fragment C4b. It also accelerates the degradation of the C4bC2a complex (C3 convertase) by dissociating the complement fragment C2a. Alpha chain binds C4b. It also interacts with serum amyloid P component. This is C4b-binding protein (C4bpa) from Mus musculus (Mouse).